The primary structure comprises 103 residues: Small ribosomal subunit protein uS10 (103 aa).

Belongs to the universal ribosomal protein uS10 family. In terms of assembly, part of the 30S ribosomal subunit.

Functionally, involved in the binding of tRNA to the ribosomes. The polypeptide is Small ribosomal subunit protein uS10 (Borrelia recurrentis (strain A1)).